Here is a 250-residue protein sequence, read N- to C-terminus: 1-(5-phosphoribosyl)-5-[(5-phosphoribosylamino)methylideneamino] imidazole-4-carboxamide isomerase (250 aa).

Asp-12 functions as the Proton acceptor in the catalytic mechanism. Asp-134 functions as the Proton donor in the catalytic mechanism.

Belongs to the HisA/HisF family.

The protein resides in the cytoplasm. The catalysed reaction is 1-(5-phospho-beta-D-ribosyl)-5-[(5-phospho-beta-D-ribosylamino)methylideneamino]imidazole-4-carboxamide = 5-[(5-phospho-1-deoxy-D-ribulos-1-ylimino)methylamino]-1-(5-phospho-beta-D-ribosyl)imidazole-4-carboxamide. It participates in amino-acid biosynthesis; L-histidine biosynthesis; L-histidine from 5-phospho-alpha-D-ribose 1-diphosphate: step 4/9. The chain is 1-(5-phosphoribosyl)-5-[(5-phosphoribosylamino)methylideneamino] imidazole-4-carboxamide isomerase from Actinobacillus pleuropneumoniae serotype 3 (strain JL03).